We begin with the raw amino-acid sequence, 233 residues long: Riboflavin kinase (233 aa).

The tract at residues 1-104 (MVRDIKTFKF…YKKIFDDEGT (104 aa)) is H-T-H motif-like. A riboflavin kinase region spans residues 105–233 (IKIKGEVFSG…GDFVEVEVIL (129 aa)). 114–119 (GVGEGR) contacts CDP. The Mg(2+) site is built by Thr143 and Asn145. The FMN site is built by Thr200 and Glu208. 213-216 (VKLR) provides a ligand contact to CDP.

This sequence belongs to the archaeal riboflavin kinase family. Mg(2+) serves as cofactor.

The enzyme catalyses riboflavin + CTP = CDP + FMN + H(+). Its pathway is cofactor biosynthesis; FMN biosynthesis; FMN from riboflavin (CTP route): step 1/1. Its function is as follows. Catalyzes the CTP-dependent phosphorylation of riboflavin (vitamin B2) to form flavin mononucleotide (FMN). In Archaeoglobus fulgidus (strain ATCC 49558 / DSM 4304 / JCM 9628 / NBRC 100126 / VC-16), this protein is Riboflavin kinase (ribK).